The following is a 313-amino-acid chain: MSQSRHRAEAPPLEREDSGTFSLGKMITAKPGKTPIQVLHEYGMKTKNIPVYECERSDVQIHVPTFTFRVTVGDITCTGEGTSKKLAKHRAAEAAINILKANASICFAVPDPLMPDPSKQPKNQLNPIGSLQELAIHHGWRLPEYTLSQEGGPAHKREYTTICRLESFMETGKGASKKQAKRNAAEKFLAKFSNISPENHISLTNVVGHSLGCTWHSLRNSPGEKINLLKRSLLSIPNTDYIQLLSEIAKEQGFNITYLDIDELSANGQYQCLAELSTSPITVCHGSGISCGNAQSDAAHNALQYLKIIAERK.

Basic and acidic residues predominate over residues 1-18 (MSQSRHRAEAPPLEREDS). The tract at residues 1 to 21 (MSQSRHRAEAPPLEREDSGTF) is disordered. Sufficient for self-association and interaction with TARBP2 regions lie at residues 1–103 (MSQS…KANA), 102–195 (NASI…FSNI), and 195–313 (ISPE…AERK). The residue at position 18 (Ser-18) is a Phosphoserine. 3 DRBM domains span residues 34-101 (TPIQ…ILKA), 126-194 (NPIG…KFSN), and 240-308 (DYIQ…YLKI). Residues Ser-167, Ser-246, and Ser-287 each carry the phosphoserine modification.

Belongs to the PRKRA family. In terms of assembly, homodimer. Interacts with EIF2AK2/PKR through its DRBM domains. Interacts with DICER1, AGO2 and TARBP2. Also able to interact with dsRNA. Interacts with UBC9. Forms a complex with UBC9 and p53/TP53. Interacts with DUS2L (via DRBM domain). Interacts with RIGI. As to quaternary structure, (Microbial infection) Interacts with ebolavirus protein VP35; this interaction inhibits the interaction between RIGI and PRKRA. In addition, this interaction disrupts the interaction between VP35 and the viral polymerase L. So the VP35-PRKRA interaction plays a critical role in determining the outcome of ebolavirus infection. The interaction PRKRA-VP35 also prevents PRKRA binding to DICER1 and thus allows the virus to counteract host RNA silencing. (Microbial infection) Interacts with human herpesvirus 8 protein MTA/ORF57; this interaction inhibits stress granule formation. Post-translationally, phosphorylated at Ser-246 in unstressed cells and at Ser-287 in stressed cells. Phosphorylation at Ser-246 appears to be a prerequisite for subsequent phosphorylation at Ser-287. Phosphorylation at Ser-246 and Ser-287 are necessary for activation of EIF2AK2/PKR under conditions of stress.

The protein resides in the cytoplasm. The protein localises to the perinuclear region. Its function is as follows. Activates EIF2AK2/PKR in the absence of double-stranded RNA (dsRNA), leading to phosphorylation of EIF2S1/EFI2-alpha and inhibition of translation and induction of apoptosis. Required for siRNA production by DICER1 and for subsequent siRNA-mediated post-transcriptional gene silencing. Does not seem to be required for processing of pre-miRNA to miRNA by DICER1. Promotes UBC9-p53/TP53 association and sumoylation and phosphorylation of p53/TP53 at 'Lys-386' at 'Ser-392' respectively and enhances its activity in a EIF2AK2/PKR-dependent manner. This is Interferon-inducible double-stranded RNA-dependent protein kinase activator A (PRKRA) from Homo sapiens (Human).